Reading from the N-terminus, the 155-residue chain is MSDKSESYKVITDNRQARYLYEILETFEAGIQLTGTEVKSIRAGKVNLQDGYALLRDGEIWLINAHISPYNASGQYFNHEPRRTRKLLLHRQEIRKLIGKVEQQGLTLVPLKMYLKRGWVKVSIALGKGKKLHDKRESLKRRQDQRDMQRAMKNY.

Residues 136–155 (RESLKRRQDQRDMQRAMKNY) form a disordered region.

It belongs to the SmpB family.

Its subcellular location is the cytoplasm. Required for rescue of stalled ribosomes mediated by trans-translation. Binds to transfer-messenger RNA (tmRNA), required for stable association of tmRNA with ribosomes. tmRNA and SmpB together mimic tRNA shape, replacing the anticodon stem-loop with SmpB. tmRNA is encoded by the ssrA gene; the 2 termini fold to resemble tRNA(Ala) and it encodes a 'tag peptide', a short internal open reading frame. During trans-translation Ala-aminoacylated tmRNA acts like a tRNA, entering the A-site of stalled ribosomes, displacing the stalled mRNA. The ribosome then switches to translate the ORF on the tmRNA; the nascent peptide is terminated with the 'tag peptide' encoded by the tmRNA and targeted for degradation. The ribosome is freed to recommence translation, which seems to be the essential function of trans-translation. This Nostoc sp. (strain PCC 7120 / SAG 25.82 / UTEX 2576) protein is SsrA-binding protein.